The primary structure comprises 380 residues: Capsular polysaccharide biosynthesis glycosyltransferase CapM (380 aa).

Belongs to the glycosyltransferase group 1 family. Glycosyltransferase 4 subfamily.

Its pathway is capsule biogenesis; capsule polysaccharide biosynthesis. Its function is as follows. Required for the biosynthesis of type 1 capsular polysaccharide. This Staphylococcus aureus protein is Capsular polysaccharide biosynthesis glycosyltransferase CapM (capM).